Reading from the N-terminus, the 390-residue chain is Protein STRICTOSIDINE SYNTHASE-LIKE 3 (390 aa).

Residues 1-25 (MAMSILAKIFLVFAIYCAIDPFSHS) form the signal peptide. Residues Asn95 and Asn108 are each glycosylated (N-linked (GlcNAc...) asparagine).

The protein belongs to the strictosidine synthase family.

It localises to the vacuole. This Arabidopsis thaliana (Mouse-ear cress) protein is Protein STRICTOSIDINE SYNTHASE-LIKE 3.